The following is a 338-amino-acid chain: N-acetylmuramate/N-acetylglucosamine kinase (338 aa).

Belongs to the kinase AmgK family.

It catalyses the reaction N-acetyl-D-muramate + ATP = N-acetyl-alpha-D-muramate 1-phosphate + ADP + H(+). The enzyme catalyses N-acetyl-D-glucosamine + ATP = N-acetyl-alpha-D-glucosamine 1-phosphate + ADP + H(+). It participates in cell wall biogenesis; peptidoglycan recycling. In terms of biological role, sugar kinase that catalyzes the ATP-dependent phosphorylation of N-acetylmuramate (MurNAc) and N-acetylglucosamine (GlcNAc) at its C1 hydroxyl group, leading to MurNAc alpha-1P and GlcNAc alpha-1P, respectively. Is involved in peptidoglycan recycling as part of a cell wall recycling pathway that bypasses de novo biosynthesis of the peptidoglycan precursor UDP-MurNAc. Plays a role in intrinsic resistance to fosfomycin, which targets the de novo synthesis of UDP-MurNAc. This chain is N-acetylmuramate/N-acetylglucosamine kinase, found in Pseudomonas aeruginosa (strain ATCC 15692 / DSM 22644 / CIP 104116 / JCM 14847 / LMG 12228 / 1C / PRS 101 / PAO1).